We begin with the raw amino-acid sequence, 457 residues long: Protein trichome birefringence-like 4 (457 aa).

The chain crosses the membrane as a helical; Signal-anchor for type II membrane protein span at residues 19–37; sequence IFLTSLFFLSLFLLSSSSL. The GDS motif motif lies at 173–175; it reads GDS. Residues 420–434 carry the DCXHWCLPGXXDXWN motif motif; that stretch reads DCSHWCLPGVPDSWN.

It belongs to the PC-esterase family. TBL subfamily.

It is found in the membrane. May act as a bridging protein that binds pectin and other cell wall polysaccharides. Probably involved in maintaining esterification of pectins. May be involved in the specific O-acetylation of cell wall polymers. The protein is Protein trichome birefringence-like 4 (TBL4) of Arabidopsis thaliana (Mouse-ear cress).